Here is a 377-residue protein sequence, read N- to C-terminus: Hsc70-interacting protein 2 (377 aa).

The segment at 68–123 is disordered; it reads AKANEPANAPEDSEDEKSLSDPESDVELDMEGVIEADSDPAQPMGNYSKKATEEEV. A Phosphoserine modification is found at Ser-80. Positions 89–105 are enriched in acidic residues; that stretch reads PESDVELDMEGVIEADS. TPR repeat units follow at residues 126-159, 161-193, and 195-227; these read ASEL…SPGN, LFHA…NSDL, and AGYK…DFDE. Positions 239–276 form a coiled coil; the sequence is NAKKIEQHRLKQERRQAERKIKERQRDQRRARKEQEKH. The segment covering 243-277 has biased composition (basic and acidic residues); sequence IEQHRLKQERRQAERKIKERQRDQRRARKEQEKHN. Disordered regions lie at residues 243–302 and 344–377; these read IEQH…DILG and DVGA…DGLD. The span at 282 to 293 shows a compositional bias: gly residues; sequence GSSGEFSGGNPG. The region spanning 294 to 336 is the STI1 domain; sequence NGNMSDILGAMSDPEVSAAIQDILSNPGNITKYASNPKIYNLI. Positions 355-369 are enriched in basic and acidic residues; it reads KAGKPSEPKPKKDSA.

This sequence belongs to the FAM10 family. In terms of assembly, homotetramer. Interacts with Hsc70 as well as DNAJ homologs and Hsp90.

The protein localises to the cytoplasm. One HIP oligomer binds the ATPase domains of at least two Hsc70 molecules dependent on activation of the Hsc70 ATPase by Hsp40. Stabilizes the ADP state of Hsc70 that has a high affinity for substrate protein. Through its own chaperone activity, it may contribute to the interaction of Hsc70 with various target proteins. The polypeptide is Hsc70-interacting protein 2 (Drosophila melanogaster (Fruit fly)).